The chain runs to 556 residues: Membrane protein insertase YidC (556 aa).

5 helical membrane-spanning segments follow: residues 6 to 26 (IVLYMALALIGLSLWNAWQID), 332 to 352 (LDLTVDYGILWFLSSLLFSLM), 358 to 378 (VVGNWGWSIVLVTVLIKLAFY), 428 to 448 (LGGCLPILIQIPVFIALYWVL), and 501 to 521 (VMMFLPILFTGLFWNFPSGLV).

Belongs to the OXA1/ALB3/YidC family. Type 1 subfamily. Interacts with the Sec translocase complex via SecD. Specifically interacts with transmembrane segments of nascent integral membrane proteins during membrane integration.

Its subcellular location is the cell inner membrane. Its function is as follows. Required for the insertion and/or proper folding and/or complex formation of integral membrane proteins into the membrane. Involved in integration of membrane proteins that insert both dependently and independently of the Sec translocase complex, as well as at least some lipoproteins. Aids folding of multispanning membrane proteins. This chain is Membrane protein insertase YidC, found in Legionella pneumophila (strain Lens).